Consider the following 228-residue polypeptide: Ribonuclease 3 (228 aa).

The 126-residue stretch at Leu-7 to Gly-132 folds into the RNase III domain. A Mg(2+)-binding site is contributed by Glu-45. Residue Asp-49 is part of the active site. Mg(2+) is bound by residues Asp-118 and Glu-121. The active site involves Glu-121. A DRBM domain is found at Asp-157–Arg-226.

This sequence belongs to the ribonuclease III family. Homodimer. The cofactor is Mg(2+).

Its subcellular location is the cytoplasm. It carries out the reaction Endonucleolytic cleavage to 5'-phosphomonoester.. In terms of biological role, digests double-stranded RNA. Involved in the processing of ribosomal RNA precursors and of some mRNAs. Complements an E.coli disruption mutant, but the E.coli enzyme does not cleave R.capsulatus rRNA precursor, showing substrate recognition is different. Probably also processes some mRNAs, and tRNAs when they are encoded in the rRNA operon. Probably processes pre-crRNA and tracrRNA of type II CRISPR loci if present in the organism. This is Ribonuclease 3 (rnc) from Rhodobacter capsulatus (Rhodopseudomonas capsulata).